Here is a 255-residue protein sequence, read N- to C-terminus: 5'-nucleotidase SurE (255 aa).

A divalent metal cation contacts are provided by Asp-8, Asp-9, Ser-40, and Asn-93.

The protein belongs to the SurE nucleotidase family. It depends on a divalent metal cation as a cofactor.

It localises to the cytoplasm. It catalyses the reaction a ribonucleoside 5'-phosphate + H2O = a ribonucleoside + phosphate. Nucleotidase that shows phosphatase activity on nucleoside 5'-monophosphates. This Bradyrhizobium sp. (strain BTAi1 / ATCC BAA-1182) protein is 5'-nucleotidase SurE.